A 963-amino-acid chain; its full sequence is Importin-13 (963 aa).

HEAT repeat units lie at residues 24–54 (ENVE…QAQV), 56–88 (PQAW…KISR), 95–135 (TDQY…LSMM), 142–179 (AVAD…EFQT), 194–231 (LAVE…SWVQ), 236–268 (LQDC…NAIS), 276–325 (VNTL…ALLD), 330–372 (WQSF…DDIL), 375–438 (EAEK…YEML), 440–476 (AELL…FQSI), 487–522 (VVPG…WLAD), 524–558 (PVMI…CREC), 562–600 (LPPY…LLSA), 603–648 (VEEI…SNLF), 676–716 (PVVV…VKTL), 720–754 (FAPM…VHIF), 761–803 (FPPI…ALKR), 815–845 (VKAV…TELL), 860–893 (EDGR…FALN), and 897–931 (FSLL…QQIL). The region spanning 45–111 (AQKWLMQAQV…KAQLFTQITR (67 aa)) is the Importin N-terminal domain.

It belongs to the importin beta family. As to quaternary structure, interacts with UBC9, RAN, RBM8A, eIF-1A and PAX6.

It is found in the cytoplasm. The protein resides in the nucleus. Its function is as follows. Functions in nuclear protein import as nuclear transport receptor. Serves as receptor for nuclear localization signals (NLS) in cargo substrates. Is thought to mediate docking of the importin/substrate complex to the nuclear pore complex (NPC) through binding to nucleoporin and the complex is subsequently translocated through the pore by an energy requiring, Ran-dependent mechanism. At the nucleoplasmic side of the NPC, Ran binds to the importin, the importin/substrate complex dissociates and importin is re-exported from the nucleus to the cytoplasm where GTP hydrolysis releases Ran. The directionality of nuclear import is thought to be conferred by an asymmetric distribution of the GTP- and GDP-bound forms of Ran between the cytoplasm and nucleus. Mediates the nuclear import of UBC9, the RBM8A/MAGOH complex, PAX6 and probably other members of the paired homeobox family. Also mediates nuclear export of eIF-1A, and the cytoplasmic release of eIF-1A is triggered by the loading of import substrates onto IPO13. In Mus musculus (Mouse), this protein is Importin-13 (Ipo13).